A 375-amino-acid chain; its full sequence is All-trans-retinol dehydrogenase [NAD(+)] ADH1B (375 aa).

Ser-2 is modified (N-acetylserine). Residue Ser-23 is modified to Phosphoserine. Tyr-35 is modified (phosphotyrosine). Residues Cys-47, His-68, Cys-98, Cys-101, Cys-104, Cys-112, and Cys-175 each coordinate Zn(2+). NAD(+) is bound by residues 200 to 205 (GLGGVG), Asp-224, Lys-229, 293 to 295 (VGV), and Arg-370.

Belongs to the zinc-containing alcohol dehydrogenase family. In terms of assembly, homodimer or heterodimer of closely related subunits. Zn(2+) serves as cofactor. In terms of tissue distribution, expressed in liver.

It localises to the cytoplasm. The enzyme catalyses all-trans-retinol + NAD(+) = all-trans-retinal + NADH + H(+). It catalyses the reaction all-trans-4-hydroxyretinol + NAD(+) = all-trans-4-hydroxyretinal + NADH + H(+). It carries out the reaction all-trans-4-oxoretinol + NAD(+) = all-trans-4-oxoretinal + NADH + H(+). In terms of biological role, catalyzes the NAD-dependent oxidation of all-trans-retinol and its derivatives such as all-trans-4-hydroxyretinol and may participate in retinoid metabolism. In vitro can also catalyze the NADH-dependent reduction of all-trans-retinal and its derivatives such as all-trans-4-oxoretinal. Catalyzes in the oxidative direction with higher efficiency. Has the same affinity for all-trans-4-hydroxyretinol and all-trans-4-oxoretinal. The polypeptide is All-trans-retinol dehydrogenase [NAD(+)] ADH1B (Papio hamadryas (Hamadryas baboon)).